A 465-amino-acid chain; its full sequence is Calcitonin gene-related peptide type 1 receptor (465 aa).

The signal sequence occupies residues 1–17 (MVICLLLCTPTDIFVVA). The Extracellular portion of the chain corresponds to 18–141 (SPEVNETQEY…HTNEGRMTAM (124 aa)). N-linked (GlcNAc...) asparagine glycans are attached at residues Asn22, Asn68, Asn120, and Asn125. Cystine bridges form between Cys50–Cys76, Cys67–Cys107, and Cys90–Cys129. A helical membrane pass occupies residues 142 to 166 (NLFYLALIGHGLSLTSLLISLGIFF). The Cytoplasmic portion of the chain corresponds to 167–177 (YFKSLSCQRIT). A helical membrane pass occupies residues 178–200 (LHKNLFFSFVLNSVITIIWLTAV). The Extracellular portion of the chain corresponds to 201–211 (ANNQELVQRNP). A helical membrane pass occupies residues 212–240 (TSCKVSQFIHLYLFGCNYFWMLCEGIYLH). The Cytoplasmic portion of the chain corresponds to 241–254 (TLIVVAVFAEKQHL). The chain crosses the membrane as a helical span at residues 255–275 (MWYYLLGWGFPLIPASIHAIA). Topologically, residues 276–291 (RSYYYNDNCWISSNTS) are extracellular. Asn289 is a glycosylation site (N-linked (GlcNAc...) asparagine). Residues 292 to 316 (LLYIIHGPICAALLVNLFFLLNIVR) form a helical membrane-spanning segment. The Cytoplasmic portion of the chain corresponds to 317–331 (VLITKLKVTHQAESS). The helical transmembrane segment at 332 to 353 (LYMKAVRATLILVPLLGIQYVL) threads the bilayer. The Extracellular segment spans residues 354–368 (LPYKPEGRVSSEIYD). A helical transmembrane segment spans residues 369–389 (YIMHILMHYQGLLVATIFCFF). Over 390–465 (NGEVQGVLRR…SILKSENPFT (76 aa)) the chain is Cytoplasmic.

The protein belongs to the G-protein coupled receptor 2 family.

It localises to the cell membrane. May function as G protein-coupled receptor for calcitonin-gene-related peptides and adrenomedullin. Specificity may be modulated by accessory proteins. May activate cAMP-dependent pathway. The chain is Calcitonin gene-related peptide type 1 receptor (calcrl) from Oncorhynchus gorbuscha (Pink salmon).